Here is a 220-residue protein sequence, read N- to C-terminus: Thiopurine S-methyltransferase (220 aa).

4 residues coordinate S-adenosyl-L-methionine: Trp10, Leu45, Glu66, and Arg123.

The protein belongs to the class I-like SAM-binding methyltransferase superfamily. TPMT family.

It is found in the cytoplasm. It catalyses the reaction S-adenosyl-L-methionine + a thiopurine = S-adenosyl-L-homocysteine + a thiopurine S-methylether.. The protein is Thiopurine S-methyltransferase of Pseudomonas syringae pv. syringae (strain B728a).